The chain runs to 624 residues: Elongation factor 4 (624 aa).

Residues 17–203 (ALIRNFCIIA…RVVRDVPAPV (187 aa)) enclose the tr-type G domain. GTP-binding positions include 29–34 (DHGKST) and 150–153 (NKID).

Belongs to the TRAFAC class translation factor GTPase superfamily. Classic translation factor GTPase family. LepA subfamily.

It is found in the cell membrane. The enzyme catalyses GTP + H2O = GDP + phosphate + H(+). Required for accurate and efficient protein synthesis under certain stress conditions. May act as a fidelity factor of the translation reaction, by catalyzing a one-codon backward translocation of tRNAs on improperly translocated ribosomes. Back-translocation proceeds from a post-translocation (POST) complex to a pre-translocation (PRE) complex, thus giving elongation factor G a second chance to translocate the tRNAs correctly. Binds to ribosomes in a GTP-dependent manner. The polypeptide is Elongation factor 4 (Streptomyces griseus subsp. griseus (strain JCM 4626 / CBS 651.72 / NBRC 13350 / KCC S-0626 / ISP 5235)).